The primary structure comprises 620 residues: 1-deoxy-D-xylulose-5-phosphate synthase (620 aa).

Thiamine diphosphate is bound by residues histidine 80 and 121–123 (GHS). Position 152 (aspartate 152) interacts with Mg(2+). Thiamine diphosphate is bound by residues 153-154 (GA), asparagine 181, tyrosine 288, and glutamate 370. Asparagine 181 serves as a coordination point for Mg(2+).

The protein belongs to the transketolase family. DXPS subfamily. As to quaternary structure, homodimer. The cofactor is Mg(2+). It depends on thiamine diphosphate as a cofactor.

It carries out the reaction D-glyceraldehyde 3-phosphate + pyruvate + H(+) = 1-deoxy-D-xylulose 5-phosphate + CO2. It functions in the pathway metabolic intermediate biosynthesis; 1-deoxy-D-xylulose 5-phosphate biosynthesis; 1-deoxy-D-xylulose 5-phosphate from D-glyceraldehyde 3-phosphate and pyruvate: step 1/1. Its function is as follows. Catalyzes the acyloin condensation reaction between C atoms 2 and 3 of pyruvate and glyceraldehyde 3-phosphate to yield 1-deoxy-D-xylulose-5-phosphate (DXP). The sequence is that of 1-deoxy-D-xylulose-5-phosphate synthase from Pseudoalteromonas translucida (strain TAC 125).